Consider the following 100-residue polypeptide: Large ribosomal subunit protein uL23 (100 aa).

Belongs to the universal ribosomal protein uL23 family. Part of the 50S ribosomal subunit. Contacts protein L29, and trigger factor when it is bound to the ribosome.

In terms of biological role, one of the early assembly proteins it binds 23S rRNA. One of the proteins that surrounds the polypeptide exit tunnel on the outside of the ribosome. Forms the main docking site for trigger factor binding to the ribosome. This chain is Large ribosomal subunit protein uL23, found in Prochlorococcus marinus (strain MIT 9215).